The chain runs to 89 residues: Small ribosomal subunit protein uS15 (89 aa).

This sequence belongs to the universal ribosomal protein uS15 family. As to quaternary structure, part of the 30S ribosomal subunit. Forms a bridge to the 50S subunit in the 70S ribosome, contacting the 23S rRNA.

One of the primary rRNA binding proteins, it binds directly to 16S rRNA where it helps nucleate assembly of the platform of the 30S subunit by binding and bridging several RNA helices of the 16S rRNA. In terms of biological role, forms an intersubunit bridge (bridge B4) with the 23S rRNA of the 50S subunit in the ribosome. This chain is Small ribosomal subunit protein uS15, found in Corynebacterium glutamicum (strain R).